Here is a 558-residue protein sequence, read N- to C-terminus: SPATS2-like protein (558 aa).

Ala-2 is subject to N-acetylalanine. The span at 63-79 (GKKKNNKRKRSKSKQHQ) shows a compositional bias: basic residues. The disordered stretch occupies residues 63-204 (GKKKNNKRKR…SPVKSNAPAA (142 aa)). 2 stretches are compositionally biased toward basic and acidic residues: residues 80–92 (GNKD…ERPE) and 110–142 (GCEK…EPPR). Ser-120 is subject to Phosphoserine. Positions 279–344 (KEEAMDILTA…ARFSCDIEQL (66 aa)) form a coiled coil. 2 disordered regions span residues 385–406 (GNFA…ANPK) and 421–514 (TMPT…RQHA). The span at 421 to 433 (TMPTNKQQNGPSS) shows a compositional bias: polar residues. Positions 469 to 485 (HEHRRQPHNGFRPKNKG) are enriched in basic residues.

The protein belongs to the SPATS2 family.

Its subcellular location is the cytoplasm. It localises to the nucleus. It is found in the nucleolus. In Mus musculus (Mouse), this protein is SPATS2-like protein (Spats2l).